The primary structure comprises 362 residues: MNKLALYCRMGFEREMAAEITDKAAEKGVFGFVRVIENSGYVIFECYQADEADYLARELDFQQLIFARQMLVVSDLLTDLPQQDRITPIVQQYQQIADKIDLKQSTELLVETADTNEAKELLGFCRKFTVPLRQTLKKQGWLRASNHAKCGLFLHLFFLRNNACYVGYSYNHNHSAHLMGIQRLKFPADAPSRSTLKLEEAILTFIPRQKETEWLNENQYAVDLGACPGGWTYQLVKRGLFVYAVDHGKMAASLHETGRIEHCAEDGFKFQPPKRQKIDWLVCDMVEKPSRIAELMTKWLLNGWCHSMIFNLKLPMKKRYAEVQQCLQYIADKLTQRGLAFQLKAKHLYHDREEITVYLRLL.

S-adenosyl-L-methionine is bound by residues S194, 227–230 (CPGG), D246, D266, and D284. Catalysis depends on K313, which acts as the Proton acceptor.

Belongs to the class I-like SAM-binding methyltransferase superfamily. RNA methyltransferase RlmE family. RlmM subfamily. Monomer.

Its subcellular location is the cytoplasm. The enzyme catalyses cytidine(2498) in 23S rRNA + S-adenosyl-L-methionine = 2'-O-methylcytidine(2498) in 23S rRNA + S-adenosyl-L-homocysteine + H(+). Catalyzes the 2'-O-methylation at nucleotide C2498 in 23S rRNA. This chain is Ribosomal RNA large subunit methyltransferase M, found in Aggregatibacter aphrophilus (strain NJ8700) (Haemophilus aphrophilus).